A 233-amino-acid polypeptide reads, in one-letter code: MIDENHPMRAAGNFFGRRHGKPLRPHQSNLFEDLLPRLKLDLATPAPQDLRSLFEAPVETVRMEIGFGGGEHLHHESGRYPQSGFIGVEPFINGMAKMLAALDQAPRPNLRLYDEDATAVLDWLPDASLAGIDLFYPDPWHKRRHWKRRFVSDANLDRFARVLKPGAKFRFASDIEHYVNWTLQHCRRHAAFDWQAESPADWNDAYEGWPGTRYEAKAFREGRRAAYLTFIRR.

Residues 1 to 22 form a disordered region; it reads MIDENHPMRAAGNFFGRRHGKP. Glu-64, Glu-89, Asp-116, and Asp-138 together coordinate S-adenosyl-L-methionine. Asp-138 is an active-site residue. Substrate contacts are provided by residues Lys-142, Asp-174, and 212–215; that span reads TRYE.

The protein belongs to the class I-like SAM-binding methyltransferase superfamily. TrmB family.

It catalyses the reaction guanosine(46) in tRNA + S-adenosyl-L-methionine = N(7)-methylguanosine(46) in tRNA + S-adenosyl-L-homocysteine. The protein operates within tRNA modification; N(7)-methylguanine-tRNA biosynthesis. In terms of biological role, catalyzes the formation of N(7)-methylguanine at position 46 (m7G46) in tRNA. In Brucella melitensis biotype 1 (strain ATCC 23456 / CCUG 17765 / NCTC 10094 / 16M), this protein is tRNA (guanine-N(7)-)-methyltransferase.